Consider the following 469-residue polypeptide: tRNA-2-methylthio-N(6)-dimethylallyladenosine synthase (469 aa).

An MTTase N-terminal domain is found at 22–142 (RKVFIKTYGC…LPEALRRAQQ (121 aa)). Residues Cys31, Cys67, Cys105, Cys183, Cys187, and Cys190 each coordinate [4Fe-4S] cluster. Residues 169-401 (RARGVTAFLT…QALLLKQQQE (233 aa)) form the Radical SAM core domain. Positions 404–466 (ESCIGKEIDL…TNSLFAERAE (63 aa)) constitute a TRAM domain.

The protein belongs to the methylthiotransferase family. MiaB subfamily. In terms of assembly, monomer. The cofactor is [4Fe-4S] cluster.

The protein localises to the cytoplasm. It carries out the reaction N(6)-dimethylallyladenosine(37) in tRNA + (sulfur carrier)-SH + AH2 + 2 S-adenosyl-L-methionine = 2-methylsulfanyl-N(6)-dimethylallyladenosine(37) in tRNA + (sulfur carrier)-H + 5'-deoxyadenosine + L-methionine + A + S-adenosyl-L-homocysteine + 2 H(+). Catalyzes the methylthiolation of N6-(dimethylallyl)adenosine (i(6)A), leading to the formation of 2-methylthio-N6-(dimethylallyl)adenosine (ms(2)i(6)A) at position 37 in tRNAs that read codons beginning with uridine. The polypeptide is tRNA-2-methylthio-N(6)-dimethylallyladenosine synthase (Rhizobium etli (strain CIAT 652)).